The sequence spans 222 residues: N-(5'-phosphoribosyl)anthranilate isomerase (222 aa).

It belongs to the TrpF family.

The catalysed reaction is N-(5-phospho-beta-D-ribosyl)anthranilate = 1-(2-carboxyphenylamino)-1-deoxy-D-ribulose 5-phosphate. The protein operates within amino-acid biosynthesis; L-tryptophan biosynthesis; L-tryptophan from chorismate: step 3/5. This Xanthomonas euvesicatoria pv. vesicatoria (strain 85-10) (Xanthomonas campestris pv. vesicatoria) protein is N-(5'-phosphoribosyl)anthranilate isomerase.